The primary structure comprises 174 residues: Protein VdlD (174 aa).

The 113-residue stretch at 20 to 132 (DRTKLLMSYL…YFTMVAVENG (113 aa)) folds into the HotDog ACOT-type domain.

It belongs to the acyl coenzyme A hydrolase family.

In Helicobacter pylori (strain J99 / ATCC 700824) (Campylobacter pylori J99), this protein is Protein VdlD (vdlD).